A 449-amino-acid chain; its full sequence is MSPESKKLFNIVILGVAFMFMFTAFQTCGNVAQTVIRSLNSTDFHGSGYTSLAIIYGVFSASNLITPSVVAIVGPQISMFVSGLFYSMYIAVFIQPFPWSFYTASVFIGIAAAVLWTAQGNCLTINSDEHTIGRNSGIFWALLQSSLFFGNLYIYFAWQGKTQISEHDRRTVFIALTVISLVGTVLFFLIRKPDPENVLGEEESCDDQDMEATESAQNNVTKAVDAFKKSLRLCVTREMLLLSVTTAYTGLELTFFSGVYGTCIGAVNKFGTEEKSLIGLSGIFIGIGEILGGSLFGLLSKNSRFGRNPVVLLGTLVHFVAFYLIFLNMPGDAPIAPVEGTNSIAYIRPSKEVAILCSFLLGLGDSCFNTQLLSILGFLYSEDSAPAFAVFKFVQSICAAVAFFYSNYLLLHWQLLVMVIFGFFGTISFFAVEWDAAAIVARGSDYRSI.

A helical membrane pass occupies residues 8–28 (LFNIVILGVAFMFMFTAFQTC). N-linked (GlcNAc...) asparagine glycosylation occurs at Asn40. The next 5 helical transmembrane spans lie at 53–73 (AIIY…VAIV), 74–94 (GPQI…AVFI), 96–116 (PFPW…AVLW), 138–158 (IFWA…YFAW), and 170–190 (RTVF…FFLI). Phosphoserine is present on Ser204. 6 helical membrane-spanning segments follow: residues 239-259 (MLLL…FSGV), 277-297 (LIGL…SLFG), 309-329 (PVVL…FLNM), 359-379 (FLLG…LGFL), 385-405 (APAF…AFFY), and 410-430 (LLHW…ISFF).

This sequence belongs to the unc-93 family. As to expression, widely expressed.

The protein localises to the membrane. The sequence is that of UNC93-like protein MFSD11 (Mfsd11) from Mus musculus (Mouse).